The sequence spans 162 residues: Phospholipase A2 (162 aa).

The N-terminal stretch at 1-22 (MKVLQMFFCVILLCVTSVLVEA) is a signal peptide. Residues 23–35 (KSTTKGDETASKR) constitute a propeptide that is removed on maturation. Intrachain disulfides connect C60–C155, C62–C78, C77–C134, C84–C127, C94–C120, and C113–C125. Residues Y61, G63, and G65 each contribute to the Ca(2+) site. H81 is an active-site residue. D82 lines the Ca(2+) pocket. Residue D128 is part of the active site.

The protein belongs to the phospholipase A2 family. Group I subfamily. D49 sub-subfamily. Requires Ca(2+) as cofactor. In terms of tissue distribution, expressed both outside and in acontia, a specialised envenomation structure laden with batteries of venom-containing nematocysts found only in the superfamily Metridioidea.

The protein resides in the secreted. It is found in the nematocyst. It carries out the reaction a 1,2-diacyl-sn-glycero-3-phosphocholine + H2O = a 1-acyl-sn-glycero-3-phosphocholine + a fatty acid + H(+). In terms of biological role, PLA2 catalyzes the calcium-dependent hydrolysis of the 2-acyl groups in 3-sn-phosphoglycerides. This chain is Phospholipase A2, found in Calliactis polypus (Hermit crab anemone).